A 1063-amino-acid polypeptide reads, in one-letter code: JmjC domain-containing histone demethylation protein 1 (1063 aa).

One can recognise a JmjC domain in the interval 86–266 (LYNVLSLEYS…TQLRVYQVEN (181 aa)). Thr160 provides a ligand contact to substrate. Fe cation is bound by residues His163 and Asp165. Position 180 (Lys180) interacts with substrate. His234 contributes to the Fe cation binding site. A compositionally biased stretch (acidic residues) spans 379 to 389 (GLEEEAEDEDV). Disordered stretches follow at residues 379–400 (GLEEEAEDEDVKPETKKEAEER), 554–750 (ESDE…NPYN), and 776–1040 (VELH…KRAK). The span at 390–400 (KPETKKEAEER) shows a compositional bias: basic and acidic residues. Composition is skewed to acidic residues over residues 594-605 (PEYDEDMEEYDP) and 613-631 (ELEEEEEEEEGEEEEEEEY). Low complexity predominate over residues 636–646 (TRRSSTRGSAS). Composition is skewed to basic and acidic residues over residues 647 to 665 (TKEEPQEEKEEKEAAPKKE), 674 to 712 (EKSSKPEKDTTEAKLKKEKKKKEMERRLRDSELEAELRA), 776 to 806 (VELHIEKNLYKLEPKRDESESREPSMEHEDS), 813 to 835 (PYDRYSHYHTENSHFQEDQDSHR), and 892 to 902 (EPRRSNDRRTS). The span at 926–937 (AEAASASSSRHS) shows a compositional bias: low complexity. Composition is skewed to polar residues over residues 950-963 (LNSSRHSSTDTPMY) and 973-982 (WLPNTSNVTR). The span at 1005–1016 (PPFPRSITPPPV) shows a compositional bias: pro residues. Positions 1020 to 1030 (ELKSQSNGRKS) are enriched in polar residues. Residues 1031 to 1040 (NYSEDGKRAK) are compositionally biased toward basic and acidic residues.

Belongs to the JHDM1 histone demethylase family. Requires Fe(2+) as cofactor.

It is found in the nucleus. It catalyses the reaction N(6),N(6)-dimethyl-L-lysyl(36)-[histone H3] + 2 2-oxoglutarate + 2 O2 = L-lysyl(36)-[histone H3] + 2 formaldehyde + 2 succinate + 2 CO2. Its function is as follows. Histone demethylase that specifically demethylates 'Lys-36' of histone H3, thereby playing a central role in histone code. The chain is JmjC domain-containing histone demethylation protein 1 (jhdm-1) from Caenorhabditis briggsae.